Consider the following 190-residue polypeptide: Holliday junction branch migration complex subunit RuvA (190 aa).

Positions 1-64 (MIGRISGQLA…EDAQILYGFG (64 aa)) are domain I. The segment at 65–137 (SATERAAFRQ…LKGKLGADIG (73 aa)) is domain II. The segment at 137 to 141 (GVQVS) is flexible linker. Residues 142–190 (VSSDSQSDILQALVALGYSDRDAALALKALPKDIGVSDGIKLALKALAK) are domain III.

This sequence belongs to the RuvA family. Homotetramer. Forms an RuvA(8)-RuvB(12)-Holliday junction (HJ) complex. HJ DNA is sandwiched between 2 RuvA tetramers; dsDNA enters through RuvA and exits via RuvB. An RuvB hexamer assembles on each DNA strand where it exits the tetramer. Each RuvB hexamer is contacted by two RuvA subunits (via domain III) on 2 adjacent RuvB subunits; this complex drives branch migration. In the full resolvosome a probable DNA-RuvA(4)-RuvB(12)-RuvC(2) complex forms which resolves the HJ.

Its subcellular location is the cytoplasm. Functionally, the RuvA-RuvB-RuvC complex processes Holliday junction (HJ) DNA during genetic recombination and DNA repair, while the RuvA-RuvB complex plays an important role in the rescue of blocked DNA replication forks via replication fork reversal (RFR). RuvA specifically binds to HJ cruciform DNA, conferring on it an open structure. The RuvB hexamer acts as an ATP-dependent pump, pulling dsDNA into and through the RuvAB complex. HJ branch migration allows RuvC to scan DNA until it finds its consensus sequence, where it cleaves and resolves the cruciform DNA. The sequence is that of Holliday junction branch migration complex subunit RuvA from Polaromonas sp. (strain JS666 / ATCC BAA-500).